A 248-amino-acid polypeptide reads, in one-letter code: Adenosylcobinamide-GDP ribazoletransferase (248 aa).

6 helical membrane-spanning segments follow: residues 36 to 56, 59 to 79, 114 to 134, 137 to 157, 170 to 190, and 199 to 219; these read FFLP…YLAL, FLPP…ITGG, GTIA…SLVL, YSIA…FLCL, IFIG…VLAL, and ATII…LLCL.

It belongs to the CobS family. It depends on Mg(2+) as a cofactor.

The protein localises to the cell membrane. The catalysed reaction is alpha-ribazole + adenosylcob(III)inamide-GDP = adenosylcob(III)alamin + GMP + H(+). It carries out the reaction alpha-ribazole 5'-phosphate + adenosylcob(III)inamide-GDP = adenosylcob(III)alamin 5'-phosphate + GMP + H(+). Its pathway is cofactor biosynthesis; adenosylcobalamin biosynthesis; adenosylcobalamin from cob(II)yrinate a,c-diamide: step 7/7. Joins adenosylcobinamide-GDP and alpha-ribazole to generate adenosylcobalamin (Ado-cobalamin). Also synthesizes adenosylcobalamin 5'-phosphate from adenosylcobinamide-GDP and alpha-ribazole 5'-phosphate. The protein is Adenosylcobinamide-GDP ribazoletransferase of Clostridium botulinum (strain Okra / Type B1).